Here is a 237-residue protein sequence, read N- to C-terminus: Large ribosomal subunit protein uL1 (237 aa).

Belongs to the universal ribosomal protein uL1 family. In terms of assembly, part of the 50S ribosomal subunit.

In terms of biological role, binds directly to 23S rRNA. The L1 stalk is quite mobile in the ribosome, and is involved in E site tRNA release. Functionally, protein L1 is also a translational repressor protein, it controls the translation of the L11 operon by binding to its mRNA. The protein is Large ribosomal subunit protein uL1 of Synechococcus elongatus (strain ATCC 33912 / PCC 7942 / FACHB-805) (Anacystis nidulans R2).